A 155-amino-acid chain; its full sequence is SsrA-binding protein (155 aa).

It belongs to the SmpB family.

It localises to the cytoplasm. Functionally, required for rescue of stalled ribosomes mediated by trans-translation. Binds to transfer-messenger RNA (tmRNA), required for stable association of tmRNA with ribosomes. tmRNA and SmpB together mimic tRNA shape, replacing the anticodon stem-loop with SmpB. tmRNA is encoded by the ssrA gene; the 2 termini fold to resemble tRNA(Ala) and it encodes a 'tag peptide', a short internal open reading frame. During trans-translation Ala-aminoacylated tmRNA acts like a tRNA, entering the A-site of stalled ribosomes, displacing the stalled mRNA. The ribosome then switches to translate the ORF on the tmRNA; the nascent peptide is terminated with the 'tag peptide' encoded by the tmRNA and targeted for degradation. The ribosome is freed to recommence translation, which seems to be the essential function of trans-translation. This Bacillus cereus (strain G9842) protein is SsrA-binding protein.